The sequence spans 235 residues: Uridylate kinase (235 aa).

Residue 9-12 (KLSG) coordinates ATP. Glycine 51 lines the UMP pocket. ATP-binding residues include glycine 52 and arginine 56. Residues aspartate 71 and 133 to 140 (SGNPFFTT) contribute to the UMP site. Positions 160, 166, and 169 each coordinate ATP.

Belongs to the UMP kinase family. In terms of assembly, homohexamer.

It is found in the cytoplasm. The enzyme catalyses UMP + ATP = UDP + ADP. It participates in pyrimidine metabolism; CTP biosynthesis via de novo pathway; UDP from UMP (UMPK route): step 1/1. Inhibited by UTP. Catalyzes the reversible phosphorylation of UMP to UDP. This chain is Uridylate kinase, found in Gloeobacter violaceus (strain ATCC 29082 / PCC 7421).